The following is an 813-amino-acid chain: DNA ligase (813 aa).

Residues D41–D45, S90–I91, and E127 contribute to the NAD(+) site. Catalysis depends on K129, which acts as the N6-AMP-lysine intermediate. Residues R150, E189, K307, and K331 each coordinate NAD(+). Zn(2+) contacts are provided by C440, C443, C458, and C464. A BRCT domain is found at A729–A813.

Belongs to the NAD-dependent DNA ligase family. LigA subfamily. Mg(2+) is required as a cofactor. It depends on Mn(2+) as a cofactor.

The enzyme catalyses NAD(+) + (deoxyribonucleotide)n-3'-hydroxyl + 5'-phospho-(deoxyribonucleotide)m = (deoxyribonucleotide)n+m + AMP + beta-nicotinamide D-nucleotide.. Functionally, DNA ligase that catalyzes the formation of phosphodiester linkages between 5'-phosphoryl and 3'-hydroxyl groups in double-stranded DNA using NAD as a coenzyme and as the energy source for the reaction. It is essential for DNA replication and repair of damaged DNA. The polypeptide is DNA ligase (Ralstonia nicotianae (strain ATCC BAA-1114 / GMI1000) (Ralstonia solanacearum)).